Consider the following 374-residue polypeptide: Fasciclin-like arabinogalactan protein CTB11 (374 aa).

The signal sequence occupies residues 1-18 (MHFPALAVAGCLLSRATA). 2 consecutive FAS1 domains span residues 19–171 (QSLD…DANM) and 173–302 (LPHN…DGAL). N-linked (GlcNAc...) asparagine glycans are attached at residues asparagine 52, asparagine 72, asparagine 120, asparagine 132, and asparagine 176. Residues 328–348 (ILASHQLTLLAVLAMALVSIL) traverse the membrane as a helical segment.

Belongs to the fasciclin-like AGP family.

The protein localises to the membrane. It participates in mycotoxin biosynthesis. In terms of biological role, fasciclin-like arabinogalactan protein; part of the gene cluster that mediates the biosynthesis of cercosporin, a light-activated, non-host-selective toxin. The perylenequinone chromophore of cercosporin absorbs light energy to attain an electronically-activated triplet state and produces active oxygen species such as the hydroxyl radical, superoxide, hydrogen peroxide or singlet oxygen upon reaction with oxygen molecules. These reactive oxygen species cause damage to various cellular components including lipids, proteins and nucleic acids. The first step of cercosporin biosynthesis is performed by the polyketide synthase CTB1 which catalyzes the formation of nor-toralactone. The starter unit acyltransferase (SAT) domain of CTB1 initiates polyketide extension by the selective utilization of acetyl-CoA, which is elongated to the heptaketide in the beta-ketoacyl synthase (KS) domain by successive condensations with six malonyl units introduced by the malonyl acyltransferase (MAT) domain. The product template (PT) domain catalyzes C4-C9 and C2-C11 aldol cyclizations and dehydrations to a trihydroxynaphthalene, which is thought to be delivered to the thioesterase (TE) domain for product release. The bifunctional enzyme CTB3 then methylates nor-toralactone to toralactone before conducting an unusual oxidative aromatic ring opening. The O-methyltransferase CTB2 further methylates the nascent OH-6 of the CBT3 product, blocking further oxidation at this site before the reductase CTB6 reduces the 2-oxopropyl ketone at position C7, giving naphthalene. The FAD-dependent monooxygenase CTB5 in concert with the multicopper oxidase CTB12 are responsible for homodimerization of naphthalene with CTB7 installing the dioxepine moiety, finally producing cercosporin. The fasciclin domain-containing protein CTB11 might act with CTB5 and CTB12 whereas the roles of CTB9 and CTB10 have still to be elucidated. This chain is Fasciclin-like arabinogalactan protein CTB11, found in Cercospora beticola (Sugarbeet leaf spot fungus).